We begin with the raw amino-acid sequence, 131 residues long: Torsin-1A-interacting protein 2, isoform IFRG15 (131 aa).

The protein is Torsin-1A-interacting protein 2, isoform IFRG15 (Tor1aip2) of Mus musculus (Mouse).